The following is a 245-amino-acid chain: Suppressor of aph-1 (245 aa).

Residues 12-60 (DTKWHYLGPDSEKYGPYMSKDMLFWLQAGYFNDGLQLKTENEPNYHTLG) enclose the GYF domain. Residues 126–166 (NQNGPPMGAQMHSQPPSEPIDAGSLSHTPDSENETRLNEQT) form a disordered region.

In terms of biological role, involved in negative regulation of early and late embryonic Notch signaling. This Caenorhabditis elegans protein is Suppressor of aph-1.